A 137-amino-acid polypeptide reads, in one-letter code: Acidic phospholipase A2 VP8 (137 aa).

Positions 1 to 16 (MRILWIVAVCLIGVEG) are cleaved as a signal peptide. 7 disulfides stabilise this stretch: Cys41-Cys130, Cys43-Cys59, Cys58-Cys110, Cys64-Cys137, Cys65-Cys103, Cys72-Cys96, and Cys90-Cys101. Residues Tyr42, Gly44, and Gly46 each coordinate Ca(2+). The active site involves His62. Asp63 is a Ca(2+) binding site. Residue Asp104 is part of the active site.

It belongs to the phospholipase A2 family. Group II subfamily. D49 sub-subfamily. As to quaternary structure, does not form a complex. Ca(2+) is required as a cofactor. In terms of tissue distribution, expressed by the venom gland.

The protein localises to the secreted. It catalyses the reaction a 1,2-diacyl-sn-glycero-3-phosphocholine + H2O = a 1-acyl-sn-glycero-3-phosphocholine + a fatty acid + H(+). Functionally, snake venom phospholipase A2 (PLA2) that is not toxic by itself, but the synergistical mixture of a basic and this acidic protein is lethal. PLA2 catalyzes the calcium-dependent hydrolysis of the 2-acyl groups in 3-sn-phosphoglycerides. This chain is Acidic phospholipase A2 VP8, found in Daboia palaestinae (Palestine viper).